The following is a 182-amino-acid chain: Glycerol-3-phosphate acyltransferase 1 (182 aa).

A run of 5 helical transmembrane segments spans residues 5 to 25 (MQFL…AYIV), 54 to 74 (GYFI…VSIA), 81 to 101 (STFV…PIVF), 117 to 137 (IAFD…FYLI), and 157 to 177 (ILYS…VLIL).

This sequence belongs to the PlsY family. Probably interacts with PlsX.

It is found in the cell membrane. It catalyses the reaction an acyl phosphate + sn-glycerol 3-phosphate = a 1-acyl-sn-glycero-3-phosphate + phosphate. Its pathway is lipid metabolism; phospholipid metabolism. Its function is as follows. Catalyzes the transfer of an acyl group from acyl-phosphate (acyl-PO(4)) to glycerol-3-phosphate (G3P) to form lysophosphatidic acid (LPA). This enzyme utilizes acyl-phosphate as fatty acyl donor, but not acyl-CoA or acyl-ACP. The sequence is that of Glycerol-3-phosphate acyltransferase 1 from Bacillus cereus (strain ATCC 10987 / NRS 248).